A 452-amino-acid polypeptide reads, in one-letter code: BUB3-interacting and GLEBS motif-containing protein ZNF207 (452 aa).

Positions 1–92 (MGRKKKKQLK…EGIPEKDMEE (92 aa)) are microtubule-binding region. C2H2-type zinc fingers lie at residues 11–34 (PWCW…KAKH) and 35–58 (FKCH…MQVH). Disordered regions lie at residues 99-131 (QKTQ…SFQQ) and 298-330 (STMS…TSAT). Acidic residues predominate over residues 113 to 123 (DDSDYDDDDDT). The interval 329–361 (ATSKLVHPDEDISLEEKRAQLPKYQRNLPRPGQ) is GLEBS.

In terms of assembly, interacts (via GLEBS region) with bub3.

The protein resides in the nucleus. Its subcellular location is the chromosome. The protein localises to the centromere. It localises to the kinetochore. It is found in the cytoplasm. The protein resides in the cytoskeleton. Its subcellular location is the spindle. In terms of biological role, kinetochore- and microtubule-binding protein that plays a key role in spindle assembly. Znf207/BuGZ is mainly composed of disordered low-complexity regions and undergoes phase transition or coacervation to form temperature-dependent liquid droplets. Coacervation promotes microtubule bundling and concentrates tubulin, promoting microtubule polymerization and assembly of spindle and spindle matrix by concentrating its building blocks. In Xenopus laevis (African clawed frog), this protein is BUB3-interacting and GLEBS motif-containing protein ZNF207.